A 453-amino-acid polypeptide reads, in one-letter code: tRNA modification GTPase MnmE (453 aa).

3 residues coordinate (6S)-5-formyl-5,6,7,8-tetrahydrofolate: Arg-22, Glu-79, and Lys-119. In terms of domain architecture, TrmE-type G spans 215-376 (GMKVVIAGRP…LKQHLKSLMG (162 aa)). K(+) is bound at residue Asn-225. Residues 225–230 (NAGKSS), 244–250 (TEIAGTT), 269–272 (DTAG), and 334–337 (NKAD) contribute to the GTP site. Ser-229 is a binding site for Mg(2+). K(+) is bound by residues Thr-244, Ile-246, and Thr-249. Position 250 (Thr-250) interacts with Mg(2+). Lys-453 serves as a coordination point for (6S)-5-formyl-5,6,7,8-tetrahydrofolate.

The protein belongs to the TRAFAC class TrmE-Era-EngA-EngB-Septin-like GTPase superfamily. TrmE GTPase family. Homodimer. Heterotetramer of two MnmE and two MnmG subunits. It depends on K(+) as a cofactor.

Its subcellular location is the cytoplasm. Exhibits a very high intrinsic GTPase hydrolysis rate. Involved in the addition of a carboxymethylaminomethyl (cmnm) group at the wobble position (U34) of certain tRNAs, forming tRNA-cmnm(5)s(2)U34. This Shewanella pealeana (strain ATCC 700345 / ANG-SQ1) protein is tRNA modification GTPase MnmE.